The sequence spans 185 residues: p53 apoptosis effector related to PMP-22 (185 aa).

4 helical membrane-spanning segments follow: residues 13–33 (WILPMLLLFAIIFDIIAIAAQ), 74–94 (VAALMIIGLIILIFAFIISLV), 105–125 (LPFIGLLLILAVIVQIIALII), and 143–163 (WAYGFGWGATILTLGCAILFC).

Belongs to the TMEM47 family.

Its subcellular location is the cell junction. It is found in the desmosome. The protein resides in the cell membrane. It localises to the cytoplasm. Functionally, component of intercellular desmosome junctions. Positively regulates apoptosis in the early-stage embryo in response to UV irradiation, this is partially dependent on tp53 activation. Required for the survival of cell populations in the developing notochord and skin, therefore required for normal embryogenesis beyond 30 hpf. Acts as a positive regulator of endothelial cell apoptosis in response to blood flow-derived shear stress. The polypeptide is p53 apoptosis effector related to PMP-22 (Danio rerio (Zebrafish)).